A 280-amino-acid chain; its full sequence is Phospholipase C D (280 aa).

Residues 258-280 form a disordered region; the sequence is VPDPQIMPTQETTPTRGIPSGPC.

This sequence belongs to the bacterial phospholipase C family.

The protein localises to the secreted. It is found in the cell wall. The enzyme catalyses a 1,2-diacyl-sn-glycero-3-phosphocholine + H2O = phosphocholine + a 1,2-diacyl-sn-glycerol + H(+). It carries out the reaction 1,2-dihexadecanoyl-sn-glycero-3-phosphocholine + H2O = 1,2-dihexadecanoyl-sn-glycerol + phosphocholine + H(+). Its function is as follows. Involved in virulence. Induces cytotoxic effects on mouse macrophage cell lines, via direct or indirect enzymatic hydrolysis of cell membrane phospholipids. Hydrolyzes phosphatidylcholine. Does not have hemolytic activity. This chain is Phospholipase C D, found in Mycobacterium tuberculosis (strain ATCC 25618 / H37Rv).